Here is a 196-residue protein sequence, read N- to C-terminus: Beta-crystallin A4 (196 aa).

Threonine 2 carries the post-translational modification N-acetylthreonine. The N-terminal arm stretch occupies residues 2 to 11 (TLQCTKSAGH). 2 Beta/gamma crystallin 'Greek key' domains span residues 12–51 (WRMVVWDEEGFQGRRHEFTAECPSVLELGFETVRSLKVLS) and 52–98 (GAWV…RPVA). The connecting peptide stretch occupies residues 99–104 (CANHRD). 2 consecutive Beta/gamma crystallin 'Greek key' domains span residues 105–146 (SRLT…HVQS) and 147–195 (GAWV…RRIQ).

It belongs to the beta/gamma-crystallin family. Homo/heterodimer, or complexes of higher-order. The structure of beta-crystallin oligomers seems to be stabilized through interactions between the N-terminal arms.

Crystallins are the dominant structural components of the vertebrate eye lens. The chain is Beta-crystallin A4 (Cryba4) from Mus musculus (Mouse).